The sequence spans 72 residues: Endolysin PlyC, small cell-wall binding subunit (72 aa).

In terms of assembly, homooctamer. Part of the PlyC holoenzyme, which is composed of 1 PLYCA and 8 PLYCB assembled into a ring structure.

In terms of biological role, component of the endolysin PlyC that degrades the host peptidoglycans and participates with the holin protein in the sequential events which lead to the programmed host cell lysis releasing the mature viral particles. Once the holin has permeabilized the host cell membrane, the endolysin can reach the periplasm and breaking down the peptidoglycan layer. The small subunit PlyCB is responsible for the specific binding of the endolysin to the host cell-wall, probably to the rhamnose of group A streptococcal carbohydrates. PlyCB is essential for lytic activity, cell wall binding is a prerequisite for cell lysis. This Streptococcus phage C1 protein is Endolysin PlyC, small cell-wall binding subunit (orf9dod).